We begin with the raw amino-acid sequence, 1017 residues long: Putative calcium-transporting ATPase 13, plasma membrane-type (1017 aa).

Met1 is modified (N-acetylmethionine). The Cytoplasmic portion of the chain corresponds to Met1–Gly147. The interval Leu20–Asn31 is interaction with calmodulin. A helical membrane pass occupies residues Leu148–Ala168. The Lumenal portion of the chain corresponds to Thr169 to Tyr186. The chain crosses the membrane as a helical span at residues Asp187–Phe207. At Arg208–Leu336 the chain is on the cytoplasmic side. Residues Asp337–Leu356 traverse the membrane as a helical segment. The Lumenal segment spans residues Val357–Met393. Residues Val394 to Leu411 form a helical membrane-spanning segment. Topologically, residues Ala412–Ile802 are cytoplasmic. Asp449 acts as the 4-aspartylphosphate intermediate in catalysis. The Mg(2+) site is built by Asp747 and Asp751. Residues Gln803 to Phe821 traverse the membrane as a helical segment. Topologically, residues Val822–Leu832 are lumenal. Residues Thr833–Ala853 form a helical membrane-spanning segment. At Thr854–Leu873 the chain is on the cytoplasmic side. A helical membrane pass occupies residues Ile874–Leu896. The Lumenal segment spans residues Gln897–Asn905. The helical transmembrane segment at Val906 to Asn926 threads the bilayer. Residues Glu927–Lys944 are Cytoplasmic-facing. A helical membrane pass occupies residues Asn945 to Leu966. At Lys967 to Asn976 the chain is on the lumenal side. Residues Leu977–Lys998 traverse the membrane as a helical segment. The Cytoplasmic segment spans residues Ser999–Val1002.

It belongs to the cation transport ATPase (P-type) (TC 3.A.3) family. Type IIB subfamily.

It localises to the membrane. The enzyme catalyses Ca(2+)(in) + ATP + H2O = Ca(2+)(out) + ADP + phosphate + H(+). Activated by calmodulin. Its function is as follows. This magnesium-dependent enzyme catalyzes the hydrolysis of ATP coupled with the translocation of calcium from the cytosol out of the cell or into organelles. This chain is Putative calcium-transporting ATPase 13, plasma membrane-type (ACA13), found in Arabidopsis thaliana (Mouse-ear cress).